A 151-amino-acid chain; its full sequence is Putative pre-16S rRNA nuclease (151 aa).

This sequence belongs to the YqgF nuclease family.

The protein resides in the cytoplasm. In terms of biological role, could be a nuclease involved in processing of the 5'-end of pre-16S rRNA. The polypeptide is Putative pre-16S rRNA nuclease (Bifidobacterium adolescentis (strain ATCC 15703 / DSM 20083 / NCTC 11814 / E194a)).